Here is a 476-residue protein sequence, read N- to C-terminus: Glycogen synthase (476 aa).

Lysine 15 provides a ligand contact to ADP-alpha-D-glucose.

Belongs to the glycosyltransferase 1 family. Bacterial/plant glycogen synthase subfamily.

The enzyme catalyses [(1-&gt;4)-alpha-D-glucosyl](n) + ADP-alpha-D-glucose = [(1-&gt;4)-alpha-D-glucosyl](n+1) + ADP + H(+). It participates in glycan biosynthesis; glycogen biosynthesis. Its function is as follows. Synthesizes alpha-1,4-glucan chains using ADP-glucose. This is Glycogen synthase from Halalkalibacterium halodurans (strain ATCC BAA-125 / DSM 18197 / FERM 7344 / JCM 9153 / C-125) (Bacillus halodurans).